Reading from the N-terminus, the 771-residue chain is DNA polymerase 1 (771 aa).

Belongs to the DNA polymerase type-B family.

The enzyme catalyses DNA(n) + a 2'-deoxyribonucleoside 5'-triphosphate = DNA(n+1) + diphosphate. The chain is DNA polymerase 1 (polI) from Pyrococcus abyssi (strain GE5 / Orsay).